Here is a 430-residue protein sequence, read N- to C-terminus: Bifunctional protein GlmU (430 aa).

The tract at residues 1-227 is pyrophosphorylase; sequence MISKTHTFVI…GEEATGINNR (227 aa). UDP-N-acetyl-alpha-D-glucosamine contacts are provided by residues Lys-25, Gln-74, 79–80, 104–106, Gly-140, Glu-154, Asn-168, and Asn-225; these read GT and YGD. Asp-106 provides a ligand contact to Mg(2+). Asn-225 lines the Mg(2+) pocket. Positions 228 to 248 are linker; sequence NDLIKAEFYFQENKRKIFTDS. The interval 249 to 430 is N-acetyltransferase; it reads GVTLVAPETV…REKQVTKRIK (182 aa). Positions 314 and 332 each coordinate UDP-N-acetyl-alpha-D-glucosamine. Residue His-344 is the Proton acceptor of the active site. 2 residues coordinate UDP-N-acetyl-alpha-D-glucosamine: Tyr-347 and Asn-358. Acetyl-CoA is bound by residues Ala-361, 367-368, Ala-404, and Arg-421; that span reads NY.

It in the N-terminal section; belongs to the N-acetylglucosamine-1-phosphate uridyltransferase family. In the C-terminal section; belongs to the transferase hexapeptide repeat family. As to quaternary structure, homotrimer. It depends on Mg(2+) as a cofactor.

The protein resides in the cytoplasm. The catalysed reaction is alpha-D-glucosamine 1-phosphate + acetyl-CoA = N-acetyl-alpha-D-glucosamine 1-phosphate + CoA + H(+). The enzyme catalyses N-acetyl-alpha-D-glucosamine 1-phosphate + UTP + H(+) = UDP-N-acetyl-alpha-D-glucosamine + diphosphate. It participates in nucleotide-sugar biosynthesis; UDP-N-acetyl-alpha-D-glucosamine biosynthesis; N-acetyl-alpha-D-glucosamine 1-phosphate from alpha-D-glucosamine 6-phosphate (route II): step 2/2. It functions in the pathway nucleotide-sugar biosynthesis; UDP-N-acetyl-alpha-D-glucosamine biosynthesis; UDP-N-acetyl-alpha-D-glucosamine from N-acetyl-alpha-D-glucosamine 1-phosphate: step 1/1. The protein operates within bacterial outer membrane biogenesis; LPS lipid A biosynthesis. Catalyzes the last two sequential reactions in the de novo biosynthetic pathway for UDP-N-acetylglucosamine (UDP-GlcNAc). The C-terminal domain catalyzes the transfer of acetyl group from acetyl coenzyme A to glucosamine-1-phosphate (GlcN-1-P) to produce N-acetylglucosamine-1-phosphate (GlcNAc-1-P), which is converted into UDP-GlcNAc by the transfer of uridine 5-monophosphate (from uridine 5-triphosphate), a reaction catalyzed by the N-terminal domain. This Wolbachia pipientis wMel protein is Bifunctional protein GlmU.